Consider the following 436-residue polypeptide: MAEVKKSIPKRRFVGKKNRKENNLDGSNRDVENAALVTINSKRSAGRVATQIPEDILNDKAINEAIKLLPQNYNFEIHKTIWHIRLRKAKRVALQLPEGLLMFGCILSDIFEQFCQVETIVMGDVTYGACCIDDFTARALDCDFLVHYGHSCLIPVDQTPIKVLYVFVDIKIDLQHVVSSLKHNLPSNSRLALVGTIQFVGSLNSIKDALQIQDEDGKGGFYVVIPQAKPLSPGEALGCTSPYIEKGSVDALIYIGDGRFHLESVMIANPDLPAYRYDPYSHKLSIESYAHEEMKSIRYSAVEKARTAKKFGLIQGTLGRQGSPKVLENLKNTLRKNNKDFVCVLMSEIFPSRLGQFSDIDAWIQVACPRLSIDWGYAFPAPLLTPYEASAAFNVVPWKEVYPMDFYATNSLGNWTPNNPENRPLPNRKKTGPVSS.

The segment at 1 to 27 (MAEVKKSIPKRRFVGKKNRKENNLDGS) is disordered. The span at 7-19 (SIPKRRFVGKKNR) shows a compositional bias: basic residues. Residues Cys130, Cys239, and Cys368 each contribute to the [4Fe-4S] cluster site. The interval 417–436 (PNNPENRPLPNRKKTGPVSS) is disordered. Basic residues predominate over residues 426–436 (PNRKKTGPVSS).

It belongs to the DPH1/DPH2 family. DPH1 subfamily. As to quaternary structure, component of the 2-(3-amino-3-carboxypropyl)histidine synthase complex composed of dph1, dph2, dph3 and a NADH-dependent reductase, predominantly cbr1. Requires [4Fe-4S] cluster as cofactor.

It is found in the cytoplasm. It catalyses the reaction L-histidyl-[translation elongation factor 2] + S-adenosyl-L-methionine = 2-[(3S)-amino-3-carboxypropyl]-L-histidyl-[translation elongation factor 2] + S-methyl-5'-thioadenosine + H(+). It participates in protein modification; peptidyl-diphthamide biosynthesis. Its function is as follows. Catalyzes the first step of diphthamide biosynthesis, a post-translational modification of histidine which occurs in elongation factor 2. Dph1 and dph2 transfer a 3-amino-3-carboxypropyl (ACP) group from S-adenosyl-L-methionine (SAM) to a histidine residue, the reaction is assisted by a reduction system comprising dph3 and a NADH-dependent reductase, predominantly cbr1. The chain is 2-(3-amino-3-carboxypropyl)histidine synthase subunit 1 (dph1) from Schizosaccharomyces pombe (strain 972 / ATCC 24843) (Fission yeast).